We begin with the raw amino-acid sequence, 907 residues long: Translation initiation factor IF-2 (907 aa).

Composition is skewed to basic and acidic residues over residues 223-235, 251-263, and 270-281; these read LAQR…KRAA, VAKE…EKNA, and GGKDWNDSDGKK. The segment at 223–320 is disordered; the sequence is LAQRRQEEAK…ENQQHAFTAP (98 aa). The tr-type G domain occupies 407–576; that stretch reads PRPPVVTVMG…LLQAEVLELK (170 aa). Positions 416-423 are G1; sequence GHVDHGKT. 416–423 is a binding site for GTP; it reads GHVDHGKT. The interval 441 to 445 is G2; it reads GITQH. The G3 stretch occupies residues 462–465; sequence DTPG. Residues 462–466 and 516–519 contribute to the GTP site; these read DTPGH and NKID. The interval 516 to 519 is G4; that stretch reads NKID. The segment at 552-554 is G5; it reads SAK.

It belongs to the TRAFAC class translation factor GTPase superfamily. Classic translation factor GTPase family. IF-2 subfamily.

Its subcellular location is the cytoplasm. One of the essential components for the initiation of protein synthesis. Protects formylmethionyl-tRNA from spontaneous hydrolysis and promotes its binding to the 30S ribosomal subunits. Also involved in the hydrolysis of GTP during the formation of the 70S ribosomal complex. The protein is Translation initiation factor IF-2 of Methylobacillus flagellatus (strain ATCC 51484 / DSM 6875 / VKM B-1610 / KT).